The sequence spans 133 residues: NADPH-dependent 7-cyano-7-deazaguanine reductase (133 aa).

Cys-49 acts as the Thioimide intermediate in catalysis. The Proton donor role is filled by Asp-56. Residues 71–73 (IEL) and 90–91 (HE) each bind substrate.

This sequence belongs to the GTP cyclohydrolase I family. QueF type 1 subfamily.

The protein resides in the cytoplasm. It catalyses the reaction 7-aminomethyl-7-carbaguanine + 2 NADP(+) = 7-cyano-7-deazaguanine + 2 NADPH + 3 H(+). It participates in tRNA modification; tRNA-queuosine biosynthesis. Functionally, catalyzes the NADPH-dependent reduction of 7-cyano-7-deazaguanine (preQ0) to 7-aminomethyl-7-deazaguanine (preQ1). In Leptospira interrogans serogroup Icterohaemorrhagiae serovar copenhageni (strain Fiocruz L1-130), this protein is NADPH-dependent 7-cyano-7-deazaguanine reductase.